A 258-amino-acid chain; its full sequence is MSFHDLHHQGVPFVLPNAWDVPSALAYLAEGFTAIGTTSFGVSSSGGHPDGHRATRGANIALAAALAPLQCYVSVDIEDGYSDEPDAIADYVAQLSTAGINIEDSSAEKLIDPALAAAKIVAIKQRNPEVFVNARVDTYWLRQHADTTSTIQRALRYVDAGADGVFVPLANDPDELAELTRNIPCPVNTLPVPGLTIADLGELGVARVSTGSVPYSAGLYAAAHAARAVSDGEQLPRSVPYAELQARLVDYENRTSTT.

This is an uncharacterized protein from Mycobacterium tuberculosis (strain CDC 1551 / Oshkosh).